The following is a 755-amino-acid chain: Kelch-like protein 5 (755 aa).

Residues L152–S184 form a disordered region. The span at D158–S168 shows a compositional bias: acidic residues. Residues D169–S184 show a composition bias toward low complexity. Positions C220 to E287 constitute a BTB domain. Kelch repeat units lie at residues T468 to D514, K515 to G561, M563 to G608, K609 to G655, L657 to D708, and K709 to K754.

As to expression, expressed in adrenal gland, ovary and thyroid gland and less abundantly in lymph node, prostate, spinal cord, testis and trachea.

The protein resides in the cytoplasm. It is found in the cytoskeleton. In Homo sapiens (Human), this protein is Kelch-like protein 5 (KLHL5).